The following is a 105-amino-acid chain: Probable non-functional immunoglobulin lambda variable 5-48 (105 aa).

The signal sequence occupies residues 1-19 (MAWTPLLLLFLSHCTGSLS). The tract at residues 20 to 44 (QAVLTQPTSLSASPGASARLTCTLR) is framework-1. An Ig-like domain is found at 20–105 (QAVLTQPTSL…NAGILFISGL (86 aa)). Positions 45-53 (SGISVGSYR) are complementarity-determining-1. The framework-2 stretch occupies residues 54-70 (IYWYQQKPGSPPRYLLN). Residues 71-77 (YYSDSDK) form a complementarity-determining-2 region. A framework-3 region spans residues 78-105 (HQGSGVPSRFSGSKDASTNAGILFISGL).

In terms of assembly, immunoglobulins are composed of two identical heavy chains and two identical light chains; disulfide-linked.

The protein localises to the secreted. It is found in the cell membrane. Functionally, probable non-functional open reading frame (ORF) of V region of the variable domain of immunoglobulin light chains. Non-functional ORF generally cannot participate in the synthesis of a productive immunoglobulin chain due to altered V-(D)-J or switch recombination and/or splicing site (at mRNA level) and/or conserved amino acid change (protein level). Immunoglobulins, also known as antibodies, are membrane-bound or secreted glycoproteins produced by B lymphocytes. In the recognition phase of humoral immunity, the membrane-bound immunoglobulins serve as receptors which, upon binding of a specific antigen, trigger the clonal expansion and differentiation of B lymphocytes into immunoglobulins-secreting plasma cells. Secreted immunoglobulins mediate the effector phase of humoral immunity, which results in the elimination of bound antigens. The antigen binding site is formed by the variable domain of one heavy chain, together with that of its associated light chain. Thus, each immunoglobulin has two antigen binding sites with remarkable affinity for a particular antigen. The variable domains are assembled by a process called V-(D)-J rearrangement and can then be subjected to somatic hypermutations which, after exposure to antigen and selection, allow affinity maturation for a particular antigen. The protein is Probable non-functional immunoglobulin lambda variable 5-48 of Homo sapiens (Human).